The primary structure comprises 76 residues: Envelope small membrane protein (76 aa).

The Virion surface segment spans residues 1–14; the sequence is MLQLVNDNGLVVNV. The helical transmembrane segment at 15-35 threads the bilayer; sequence ILWLFVLFFLLIISITFVQLV. Residues 36 to 76 lie on the Intravirion side of the membrane; that stretch reads NLCFTCHRLCNSAVYTPIGRLYRVYKSYMRIDPLPSTVIDV.

Belongs to the alphacoronaviruses E protein family. In terms of assembly, homopentamer. Interacts with membrane protein M in the budding compartment of the host cell, which is located between endoplasmic reticulum and the Golgi complex. Interacts with Nucleoprotein. Interacts with host IRF3; this interaction inhibits type I IFN production.

The protein localises to the host Golgi apparatus membrane. Its subcellular location is the host endoplasmic reticulum. Its function is as follows. Plays a central role in virus morphogenesis and assembly. Acts as a viroporin and self-assembles in host membranes forming pentameric protein-lipid pores that allow ion transport. Also plays a role in the induction of apoptosis. Counteracts the production of type I interferon by interacting with host IRF3 component and preventing its translocation to the host nucleus. The polypeptide is Envelope small membrane protein (Sus scrofa (Pig)).